The following is a 561-amino-acid chain: MTFGYKLDEDGVTFNLWAPYQRKVKLKILNRGIYEMERDDKGYFTITLDNVRVGDRYKYILDDNSEVPDPASRYQPEGVHGYSEIISPDFEWDDENSVKVKREDLVIYELHIGTFTSEGTFEGVIKKLNYLKELGVTAIEIMPIAQFPGKKDWGYDGVYLYAVQNSYGGPSGFRKLVNEAHKLGLAVILDVVYNHVGPEGNYMVKLGPYFSEKYKTPWGLTFNFDDAGSDEVRKFILENVEYWINEFHVDGFRLDAVHAIIDNSPKHILEDIADVVHKYDKIVIAESDLNDPRVVNPKEKCGYNIDAQWVDDFHHAIHAFLTGERQGYYSDFGSIGDIVKSYKDVFIYDGKYSNFRRKTHGKSVGDLDGCKFVVYIQNHDQVGNRGGGERLIKLVDKESYKIAAALYILSPYIPMIFMGEEYGEENPFYYFSDFSDPKLIQGVREGRRRENGQETDPQSDCTFNDSKLSWKINDDILSFYKSLIKIRKEYGLACNRKLSVENGNYWLTVKGNGCLAVYVFSKSVIEMKYSGTLVLSSNSSFPSQITESKYELDKGFALYKL.

253–258 (RLDAVH) lines the substrate pocket. The Nucleophile role is filled by Asp-255. Glu-286 serves as the catalytic Proton donor. Substrate contacts are provided by residues 311–315 (DDFHH) and 379–384 (HDQVGN).

The protein belongs to the glycosyl hydrolase 13 family. As to quaternary structure, homodimer.

It is found in the cytoplasm. The enzyme catalyses hydrolysis of (1-&gt;4)-alpha-D-glucosidic linkage in 4-alpha-D-[(1-&gt;4)-alpha-D-glucanosyl]n trehalose to yield trehalose and (1-&gt;4)-alpha-D-glucan.. It participates in glycan biosynthesis; trehalose biosynthesis. The chain is Malto-oligosyltrehalose trehalohydrolase (treZ) from Saccharolobus solfataricus (strain ATCC 35092 / DSM 1617 / JCM 11322 / P2) (Sulfolobus solfataricus).